A 522-amino-acid chain; its full sequence is Sugar transport protein 1 (522 aa).

Topologically, residues methionine 1–phenylalanine 22 are cytoplasmic. A helical membrane pass occupies residues valine 23 to isoleucine 43. The Extracellular segment spans residues serine 44–serine 79. A helical transmembrane segment spans residues proline 80–alanine 100. Residues serine 101–glycine 117 are Cytoplasmic-facing. Residues isoleucine 118–valine 138 traverse the membrane as a helical segment. At glycine 139–arginine 140 the chain is on the extracellular side. The helical transmembrane segment at isoleucine 141 to methionine 161 threads the bilayer. The Cytoplasmic portion of the chain corresponds to alanine 162–asparagine 171. The helical transmembrane segment at isoleucine 172–phenylalanine 192 threads the bilayer. At alanine 193–arginine 202 the chain is on the extracellular side. Residues leucine 203–proline 223 form a helical membrane-spanning segment. Topologically, residues aspartate 224–methionine 289 are cytoplasmic. The residue at position 252 (serine 252) is a Phosphoserine. Residues isoleucine 290–phenylalanine 310 traverse the membrane as a helical segment. Residues asparagine 311–leucine 321 are Extracellular-facing. A helical transmembrane segment spans residues methionine 322–valine 342. Topologically, residues aspartate 343–arginine 348 are cytoplasmic. A helical membrane pass occupies residues phenylalanine 349 to isoleucine 369. The Extracellular segment spans residues glycine 370–lysine 384. A helical transmembrane segment spans residues tryptophan 385 to tryptophan 405. At glycine 406–serine 427 the chain is on the cytoplasmic side. A helical transmembrane segment spans residues isoleucine 428–leucine 448. Residues cysteine 449 to lysine 452 lie on the Extracellular side of the membrane. Residues phenylalanine 453–phenylalanine 473 traverse the membrane as a helical segment. Residues leucine 474–valine 522 are Cytoplasmic-facing.

This sequence belongs to the major facilitator superfamily. Sugar transporter (TC 2.A.1.1) family. Mostly expressed in young leaves, especially in guard cells (at protein level). Also present in roots.

Its subcellular location is the cell membrane. Functionally, major hexose transporter. Mediates an active uptake of hexoses, by sugar/hydrogen symport. Can transport glucose, 3-O-methylglucose, fructose, xylose, mannose, galactose, fucose, 2-deoxyglucose and arabinose. Confers sensitivity to galactose in seedlings. The protein is Sugar transport protein 1 (STP1) of Arabidopsis thaliana (Mouse-ear cress).